A 122-amino-acid chain; its full sequence is Fluoride-specific ion channel FluC (122 aa).

4 consecutive transmembrane segments (helical) span residues 4–24 (LAVL…SIFI), 33–53 (LGTM…SIYL), 66–86 (LLIT…LEGI), and 95–115 (LKAF…VALG). 2 residues coordinate Na(+): glycine 73 and threonine 76.

It belongs to the fluoride channel Fluc/FEX (TC 1.A.43) family.

It localises to the cell inner membrane. It carries out the reaction fluoride(in) = fluoride(out). With respect to regulation, na(+) is not transported, but it plays an essential structural role and its presence is essential for fluoride channel function. Functionally, fluoride-specific ion channel. Important for reducing fluoride concentration in the cell, thus reducing its toxicity. In Hydrogenobaculum sp. (strain Y04AAS1), this protein is Fluoride-specific ion channel FluC.